Reading from the N-terminus, the 766-residue chain is BMP/retinoic acid-inducible neural-specific protein 3 (766 aa).

An N-terminal signal peptide occupies residues 1-33 (MIWRSRAGAELFSLMALWEWIALSLHCWVLAVA). The MACPF domain maps to 74-264 (RYKIYREFGR…FVQAALSYIA (191 aa)). N-linked (GlcNAc...) asparagine glycosylation is found at Asn-168, Asn-337, Asn-456, Asn-562, Asn-609, and Asn-641.

The protein belongs to the BRINP family. In terms of tissue distribution, strongly expressed in oral keratinocytes compared to the weak expression in tongue squamous cell carcinoma (SCC). Expressed in endothelial and aortic smooth muscle cells. Overexpressed in gonadotropinomas compared to normal pituitarie tissues.

The protein resides in the secreted. Its subcellular location is the mitochondrion. Inhibits neuronal cell proliferation by negative regulation of the cell cycle transition. Promotes pituitary gonadotrope cell proliferation, migration and invasion, when overexpressed. May play a role in cell pituitary tumor development. This Homo sapiens (Human) protein is BMP/retinoic acid-inducible neural-specific protein 3 (BRINP3).